A 113-amino-acid polypeptide reads, in one-letter code: Large ribosomal subunit protein uL22 (113 aa).

Belongs to the universal ribosomal protein uL22 family. In terms of assembly, part of the 50S ribosomal subunit.

This protein binds specifically to 23S rRNA; its binding is stimulated by other ribosomal proteins, e.g. L4, L17, and L20. It is important during the early stages of 50S assembly. It makes multiple contacts with different domains of the 23S rRNA in the assembled 50S subunit and ribosome. Its function is as follows. The globular domain of the protein is located near the polypeptide exit tunnel on the outside of the subunit, while an extended beta-hairpin is found that lines the wall of the exit tunnel in the center of the 70S ribosome. The protein is Large ribosomal subunit protein uL22 of Syntrophomonas wolfei subsp. wolfei (strain DSM 2245B / Goettingen).